The primary structure comprises 397 residues: Multidrug resistance protein MdtH (397 aa).

The next 10 helical transmembrane spans lie at W11–I31, F71–L91, A94–F114, L137–L157, Y163–L183, L211–I231, A242–A262, F291–I311, L338–A358, and L366–F386.

Belongs to the major facilitator superfamily. DHA1 family. MdtH (TC 2.A.1.2.21) subfamily.

Its subcellular location is the cell inner membrane. This is Multidrug resistance protein MdtH from Aeromonas salmonicida (strain A449).